Consider the following 145-residue polypeptide: Transcriptional regulator MraZ (145 aa).

SpoVT-AbrB domains lie at 7-54 (NATN…GPDL) and 83-126 (GVFM…QPQA).

This sequence belongs to the MraZ family. In terms of assembly, forms oligomers.

It localises to the cytoplasm. It is found in the nucleoid. This is Transcriptional regulator MraZ from Rhizobium leguminosarum bv. trifolii (strain WSM2304).